The following is a 24-amino-acid chain: Ascaphin-5 (24 aa).

As to expression, expressed by the skin glands.

The protein localises to the secreted. Its function is as follows. Antimicrobial peptide. Synthetic peptide shows higher potency against Gram-negative bacteria than against Gram-positive bacteria. Has a very week hemolytic activity. This Ascaphus truei (Coastal tailed frog) protein is Ascaphin-5.